We begin with the raw amino-acid sequence, 89 residues long: Luqin-like RYamide peptides lury-1 (89 aa).

The first 19 residues, 1–19, serve as a signal peptide directing secretion; that stretch reads MLTRVPVLILAVIVMLALC. A propeptide spanning residues 20 to 26 is cleaved from the precursor; it reads QEPEKPE. 2 positions are modified to tyrosine amide: tyrosine 35 and tyrosine 43. Residues 47–89 constitute a propeptide that is removed on maturation; it reads SGNLMESSQNSLTEESSDVVCQLIDGKYICLPVDAVRFRPFFL.

In terms of tissue distribution, expressed in the M1 and M2 pharyngeal neurons from where the LURY-1-1 and LURY-1-2 peptides are secreted.

It localises to the secreted. In terms of biological role, acts as a ligand for the npr-22 receptor and controls food-related processes including feeding, lifespan, egg-laying and roaming behavior. Secreted in the presence of food, leading to reduced feeding and roaming behavior and increased egg laying and lifespan. Activity may be latent under normal conditions but induced under conditions that cause hyperactivation of the pharynx such as abrupt refeeding after starvation. This is Luqin-like RYamide peptides lury-1 from Caenorhabditis elegans.